A 283-amino-acid chain; its full sequence is Non-selective voltage-gated ion channel VDAC1 (283 aa).

Residue A2 is modified to N-acetylalanine. K12 provides a ligand contact to ATP. A Glycyl lysine isopeptide (Lys-Gly) (interchain with G-Cter in ubiquitin) cross-link involves residue K12. S13 is subject to Phosphoserine. T19 is subject to Phosphothreonine. Residue K20 coordinates ATP. At K20 the chain carries N6-acetyllysine; alternate. N6-succinyllysine; alternate is present on K20. Residue K20 forms a Glycyl lysine isopeptide (Lys-Gly) (interchain with G-Cter in ubiquitin); alternate linkage. A run of 2 beta stranded transmembrane segments spans residues 26 to 35 and 39 to 47; these read LIKLDLKTKS and LEFTSSGSA. Residues K53 and K61 each participate in a glycyl lysine isopeptide (Lys-Gly) (interchain with G-Cter in ubiquitin) cross-link. The chain crosses the membrane as a beta stranded span at residues 54 to 64; sequence VTGSLETKYRW. Phosphotyrosine is present on Y67. The next 3 beta stranded transmembrane spans lie at 69–76, 80–89, and 95–104; these read LTFTEKWN, TLGTEITVED, and LKLTFDSSFS. At T107 the chain carries Phosphothreonine. Position 109 is an N6-acetyllysine; alternate (K109). A Glycyl lysine isopeptide (Lys-Gly) (interchain with G-Cter in ubiquitin); alternate cross-link involves residue K109. Residue K110 forms a Glycyl lysine isopeptide (Lys-Gly) (interchain with G-Cter in ubiquitin) linkage. 4 beta stranded membrane passes run 111–120, 123–130, 137–145, and 150–158; these read NAKIKTGYKR, INLGCDMD, SIRGALVLG, and LAGYQMNFE. K161 participates in a covalent cross-link: Glycyl lysine isopeptide (Lys-Gly) (interchain with G-Cter in ubiquitin). Beta stranded transmembrane passes span 163–175, 178–185, 189–198, 202–211, 218–227, and 231–238; these read RVTQ…GYKT, FQLHTNVN, EFGGSIYQKV, LETAVNLAWT, RFGIAAKYQI, and ACFSAKVN. S193 is subject to Phosphoserine; by NEK1. S240 is modified (phosphoserine). 242–244 provides a ligand contact to NAD(+); it reads LIG. The beta stranded transmembrane segment at 242–251 threads the bilayer; the sequence is LIGLGYTQTL. K252 bears the N6-acetyllysine mark. The beta stranded transmembrane segment at 254-263 threads the bilayer; it reads GIKLTLSALL. NAD(+) is bound at residue 260–264; the sequence is SALLD. K266 carries the post-translational modification N6-acetyllysine; alternate. Residue K266 forms a Glycyl lysine isopeptide (Lys-Gly) (interchain with G-Cter in ubiquitin); alternate linkage. The beta stranded transmembrane segment at 273 to 282 threads the bilayer; it reads HKLGLGLEFQ. K274 is covalently cross-linked (Glycyl lysine isopeptide (Lys-Gly) (interchain with G-Cter in ubiquitin)).

It belongs to the eukaryotic mitochondrial porin family. As to quaternary structure, homodimer and homotrimer; in response to cyclic AMP or calcium; oligomerization is required for scramblase activity. Component of the mitochondrial permeability transition pore complex (mPTPC), at least composed of SPG7, VDAC1 and PPIF. Interacts with SPG7, NIPSNAP2 and SLC25A30. Interacts with hexokinases including HK1. The HK1-VDAC1 complex interacts with ATF2. Interacts with BCL2L1. Interacts with BAK1. Interacts with RTL10/BOP (via BH3 domain). Interacts with amyloid-beta and APP; induces VDAC1 dephosphorylation. Interacts with TMEM41B. Interacts with BCAP31. Interacts with HSPA9; this interaction couples ITPR1 to VDAC1. In terms of assembly, (Microbial infection) Interacts with influenza A virus PB1-F2 protein. Phosphorylation at Ser-193 by NEK1 promotes the closed conformational state preventing excessive mitochondrial membrane permeability and subsequent apoptotic cell death after injury. Phosphorylation by the AKT-GSK3B axis stabilizes the protein probably by preventing ubiquitin-mediated proteasomal degradation. In terms of processing, ubiquitinated. Undergoes monoubiquitination and polyubiquitination by PRKN; monoubiquitination at Lys-274 inhibits apoptosis, whereas polyubiquitination leads to its degradation and promotes mitophagy. Deubiquitinated by USP30. Expressed in erythrocytes (at protein level). Expressed in heart, liver and skeletal muscle.

The protein localises to the mitochondrion outer membrane. The protein resides in the cell membrane. It localises to the membrane raft. It catalyses the reaction chloride(in) = chloride(out). It carries out the reaction K(+)(in) = K(+)(out). The catalysed reaction is ATP(in) = ATP(out). The enzyme catalyses Ca(2+)(in) = Ca(2+)(out). It catalyses the reaction Na(+)(in) = Na(+)(out). It carries out the reaction Mg(2+)(in) = Mg(2+)(out). The catalysed reaction is L-glutamate(out) = L-glutamate(in). The enzyme catalyses dopamine(out) = dopamine(in). It catalyses the reaction acetylcholine(in) = acetylcholine(out). It carries out the reaction Fe(III)-[cytochrome c](out) = Fe(III)-[cytochrome c](in). The catalysed reaction is a 1,2-diacyl-sn-glycero-3-phosphocholine(in) = a 1,2-diacyl-sn-glycero-3-phosphocholine(out). The enzyme catalyses a 1,2-diacyl-sn-glycero-3-phospho-L-serine(in) = a 1,2-diacyl-sn-glycero-3-phospho-L-serine(out). With respect to regulation, inhibited by nitric oxide. Non-selective voltage-gated ion channel that mediates the transport of anions and cations through the mitochondrion outer membrane and plasma membrane. The channel at the outer mitochondrial membrane allows diffusion of small hydrophilic molecules; in the plasma membrane it is involved in cell volume regulation and apoptosis. It adopts an open conformation at low or zero membrane potential and a closed conformation at potentials above 30-40 mV. The open state has a weak anion selectivity whereas the closed state is cation-selective. Binds various signaling molecules, including the sphingolipid ceramide, the phospholipid phosphatidylcholine, and the sterols cholesterol and oxysterol. In depolarized mitochondria, acts downstream of PRKN and PINK1 to promote mitophagy or prevent apoptosis; polyubiquitination by PRKN promotes mitophagy, while monoubiquitination by PRKN decreases mitochondrial calcium influx which ultimately inhibits apoptosis. May participate in the formation of the permeability transition pore complex (PTPC) responsible for the release of mitochondrial products that triggers apoptosis. May mediate ATP export from cells. Part of a complex composed of HSPA9, ITPR1 and VDAC1 that regulates mitochondrial calcium-dependent apoptosis by facilitating calcium transport from the ER lumen to the mitochondria intermembrane space thus providing calcium for the downstream calcium channel MCU that directly releases it into mitochondria matrix. Mediates cytochrome c efflux. Its function is as follows. Catalyzes the scrambling of phospholipids across the outer mitochondrial membrane; the mechanism is unrelated to channel activity and is capable of translocating both anionic and zwitterionic phospholipids. This chain is Non-selective voltage-gated ion channel VDAC1, found in Homo sapiens (Human).